A 756-amino-acid chain; its full sequence is Glutathione biosynthesis bifunctional protein GshAB (756 aa).

A glutamate--cysteine ligase region spans residues 1 to 338; sequence MNYRELMQKK…TGDIFNEQVA (338 aa). The ATP-grasp domain maps to 493–751; sequence KKILSAAGFH…LTMDVLKLLY (259 aa). Residue 520 to 578 coordinates ATP; the sequence is LRYANKAFVVKPKSTNYGLGITIFKEGASLEDFTEALRIAFKEDTAVLIEEFLPGTEYR. Mg(2+) is bound by residues Asp700, Glu721, and Asn723. Mn(2+) is bound by residues Asp700, Glu721, and Asn723.

It in the N-terminal section; belongs to the glutamate--cysteine ligase type 1 family. Type 2 subfamily. Monomer. Mg(2+) is required as a cofactor. The cofactor is Mn(2+).

It catalyses the reaction L-cysteine + L-glutamate + ATP = gamma-L-glutamyl-L-cysteine + ADP + phosphate + H(+). It carries out the reaction gamma-L-glutamyl-L-cysteine + glycine + ATP = glutathione + ADP + phosphate + H(+). Its pathway is sulfur metabolism; glutathione biosynthesis; glutathione from L-cysteine and L-glutamate: step 1/2. It functions in the pathway sulfur metabolism; glutathione biosynthesis; glutathione from L-cysteine and L-glutamate: step 2/2. In terms of biological role, synthesizes glutathione from L-glutamate and L-cysteine via gamma-L-glutamyl-L-cysteine. The chain is Glutathione biosynthesis bifunctional protein GshAB from Enterococcus faecalis (strain ATCC 700802 / V583).